Consider the following 169-residue polypeptide: ATP synthase subunit b (169 aa).

A helical transmembrane segment spans residues 13-33 (LFLFQLINFLIIVFILKKFLF).

It belongs to the ATPase B chain family. F-type ATPases have 2 components, F(1) - the catalytic core - and F(0) - the membrane proton channel. F(1) has five subunits: alpha(3), beta(3), gamma(1), delta(1), epsilon(1). F(0) has three main subunits: a(1), b(2) and c(10-14). The alpha and beta chains form an alternating ring which encloses part of the gamma chain. F(1) is attached to F(0) by a central stalk formed by the gamma and epsilon chains, while a peripheral stalk is formed by the delta and b chains.

It localises to the cell inner membrane. Functionally, f(1)F(0) ATP synthase produces ATP from ADP in the presence of a proton or sodium gradient. F-type ATPases consist of two structural domains, F(1) containing the extramembraneous catalytic core and F(0) containing the membrane proton channel, linked together by a central stalk and a peripheral stalk. During catalysis, ATP synthesis in the catalytic domain of F(1) is coupled via a rotary mechanism of the central stalk subunits to proton translocation. Its function is as follows. Component of the F(0) channel, it forms part of the peripheral stalk, linking F(1) to F(0). This chain is ATP synthase subunit b, found in Endomicrobium trichonymphae.